The primary structure comprises 208 residues: V-type ATP synthase subunit D (208 aa).

This sequence belongs to the V-ATPase D subunit family.

Produces ATP from ADP in the presence of a proton gradient across the membrane. This is V-type ATP synthase subunit D from Chlamydia caviae (strain ATCC VR-813 / DSM 19441 / 03DC25 / GPIC) (Chlamydophila caviae).